The chain runs to 59 residues: Large ribosomal subunit protein uL30 (59 aa).

It belongs to the universal ribosomal protein uL30 family. As to quaternary structure, part of the 50S ribosomal subunit.

The protein is Large ribosomal subunit protein uL30 of Photorhabdus laumondii subsp. laumondii (strain DSM 15139 / CIP 105565 / TT01) (Photorhabdus luminescens subsp. laumondii).